The chain runs to 54 residues: Preprotein translocase subunit SecG (54 aa).

The Cytoplasmic segment spans residues 1-30; the sequence is MSKNKQDAGLSTSAGLVRYMDEDASKIKIA. The chain crosses the membrane as a helical span at residues 31–52; it reads PEKVLGITISIMVLLFILNYGL. Topologically, residues 53–54 are extracellular; that stretch reads LA.

Belongs to the SEC61-beta family. Component of the protein translocase complex. Heterotrimer consisting of alpha (SecY), beta (SecG) and gamma (SecE) subunits. Can form oligomers of the heterotrimer.

It localises to the cell membrane. Functionally, involved in protein export. The function of the beta subunit is unknown, but it may be involved in stabilization of the trimeric complex. In Methanococcus aeolicus (strain ATCC BAA-1280 / DSM 17508 / OCM 812 / Nankai-3), this protein is Preprotein translocase subunit SecG.